A 152-amino-acid polypeptide reads, in one-letter code: Deoxyuridine 5'-triphosphate nucleotidohydrolase (152 aa).

Substrate is bound by residues 71–73 (RSG), Asn-84, 88–90 (LID), and Met-98.

The protein belongs to the dUTPase family. It depends on Mg(2+) as a cofactor.

The catalysed reaction is dUTP + H2O = dUMP + diphosphate + H(+). It participates in pyrimidine metabolism; dUMP biosynthesis; dUMP from dCTP (dUTP route): step 2/2. Functionally, this enzyme is involved in nucleotide metabolism: it produces dUMP, the immediate precursor of thymidine nucleotides and it decreases the intracellular concentration of dUTP so that uracil cannot be incorporated into DNA. The sequence is that of Deoxyuridine 5'-triphosphate nucleotidohydrolase from Aeromonas hydrophila subsp. hydrophila (strain ATCC 7966 / DSM 30187 / BCRC 13018 / CCUG 14551 / JCM 1027 / KCTC 2358 / NCIMB 9240 / NCTC 8049).